The sequence spans 81 residues: ATP synthase subunit c (81 aa).

2 consecutive transmembrane segments (helical) span residues 7 to 27 (AASV…PGIG) and 57 to 77 (LAFM…LLFA).

The protein belongs to the ATPase C chain family. As to quaternary structure, F-type ATPases have 2 components, F(1) - the catalytic core - and F(0) - the membrane proton channel. F(1) has five subunits: alpha(3), beta(3), gamma(1), delta(1), epsilon(1). F(0) has four main subunits: a(1), b(1), b'(1) and c(10-14). The alpha and beta chains form an alternating ring which encloses part of the gamma chain. F(1) is attached to F(0) by a central stalk formed by the gamma and epsilon chains, while a peripheral stalk is formed by the delta, b and b' chains.

The protein localises to the cellular thylakoid membrane. Functionally, f(1)F(0) ATP synthase produces ATP from ADP in the presence of a proton or sodium gradient. F-type ATPases consist of two structural domains, F(1) containing the extramembraneous catalytic core and F(0) containing the membrane proton channel, linked together by a central stalk and a peripheral stalk. During catalysis, ATP synthesis in the catalytic domain of F(1) is coupled via a rotary mechanism of the central stalk subunits to proton translocation. In terms of biological role, key component of the F(0) channel; it plays a direct role in translocation across the membrane. A homomeric c-ring of between 10-14 subunits forms the central stalk rotor element with the F(1) delta and epsilon subunits. The sequence is that of ATP synthase subunit c from Synechococcus sp. (strain CC9902).